Consider the following 251-residue polypeptide: Cell division protein ZapD (251 aa).

Belongs to the ZapD family. As to quaternary structure, interacts with FtsZ.

It is found in the cytoplasm. Cell division factor that enhances FtsZ-ring assembly. Directly interacts with FtsZ and promotes bundling of FtsZ protofilaments, with a reduction in FtsZ GTPase activity. This is Cell division protein ZapD from Burkholderia cenocepacia (strain HI2424).